We begin with the raw amino-acid sequence, 2967 residues long: BEACH domain-containing protein lvsD (2967 aa).

Disordered regions lie at residues 1 to 25 (MSSP…RIGG), 322 to 364 (NNNN…SSNS), 588 to 615 (ILSI…QQQL), 917 to 936 (NNSN…NNIN), 1077 to 1105 (GGSN…KDKD), 1173 to 1220 (NTSS…SDHR), 1583 to 1613 (NNNS…NNEN), 1831 to 1859 (QQQQ…SSVV), 1921 to 2009 (PQKT…TLNN), and 2029 to 2062 (KSTL…NNKN). The BEACH 1 domain occupies 229–491 (MTFRKAPSSV…QDLFRKGSNY (263 aa)). Over residues 1079 to 1092 (SNNNNNNNNNNSNN) the composition is skewed to low complexity. Over residues 1093–1105 (NKDKIDSNNKDKD) the composition is skewed to basic and acidic residues. Composition is skewed to low complexity over residues 1185-1194 (PLLTSTKSMS), 1583-1611 (NNNS…LNNN), 1831-1857 (QQQQ…SSSS), 1926-1980 (QNQH…SFSN), 1993-2006 (NIIT…TTST), and 2034-2062 (SSSS…NNKN). Residues 2060-2162 (NKNIKLEFST…ICAQILKLIG (103 aa)) enclose the BEACH-type PH domain. 2 BEACH domains span residues 2202–2492 (TPQQ…HPQR) and 2628–2785 (NSRV…IYSN). WD repeat units lie at residues 2658–2710 (NHKS…SDHH) and 2720–2761 (GHNF…KSIQ). Disordered regions lie at residues 2798–2820 (SATT…SSNT) and 2915–2934 (PSTS…NNGN). Composition is skewed to low complexity over residues 2811–2820 (SSSSLSSSNT) and 2924–2934 (NSNNNNNNNGN).

This Dictyostelium discoideum (Social amoeba) protein is BEACH domain-containing protein lvsD (lvsD).